A 227-amino-acid chain; its full sequence is ATP-dependent dethiobiotin synthetase BioD (227 aa).

Asp-13–Tyr-18 contacts ATP. Thr-17 contributes to the Mg(2+) binding site. Lys-38 is an active-site residue. Position 42 (Ser-42) interacts with substrate. Residues Asp-55, Glu-116 to Gly-119, and Asn-179 to Asn-180 contribute to the ATP site. Mg(2+) contacts are provided by Asp-55 and Glu-116.

Belongs to the dethiobiotin synthetase family. In terms of assembly, homodimer. Requires Mg(2+) as cofactor.

The protein localises to the cytoplasm. The catalysed reaction is (7R,8S)-7,8-diammoniononanoate + CO2 + ATP = (4R,5S)-dethiobiotin + ADP + phosphate + 3 H(+). It participates in cofactor biosynthesis; biotin biosynthesis; biotin from 7,8-diaminononanoate: step 1/2. Catalyzes a mechanistically unusual reaction, the ATP-dependent insertion of CO2 between the N7 and N8 nitrogen atoms of 7,8-diaminopelargonic acid (DAPA, also called 7,8-diammoniononanoate) to form a ureido ring. This is ATP-dependent dethiobiotin synthetase BioD from Clostridium botulinum (strain Kyoto / Type A2).